A 481-amino-acid chain; its full sequence is O-acetyltransferase andG (481 aa).

It belongs to the fumigaclavine B O-acetyltransferase family. Monomer.

The protein operates within secondary metabolite biosynthesis; terpenoid biosynthesis. Its function is as follows. O-acetyltransferase; part of the gene cluster that mediates the biosynthesis of anditomin, a fungal meroterpenoid. The first step of the pathway is the synthesis of 3,5-dimethylorsellinic acid (DMOA) by the polyketide synthase andM. DMOA is then converted to the phthalide compound 5,7-dihydroxy-4,6-dimethylphthalide (DHDMP) by the cytochrome P450 monooxygenase andK, which is further prenylated by the prenyltransferase andD to yield farnesyl-DHDMP. Further epoxidation by the FAD-dependent monooxygenase andE leads to epoxyfarnesyl-DHDMP. The next step involves the terpene cyclase andB that converts epoxyfarnesyl-DHDMP into preandiloid A through opening of the epoxide ring followed by the cyclization of the farnesyl moiety. Preandiloid A is in turn oxidized at the C-3 hydroxyl group to yield preandiloid B by the dehydrogenase andC. The dioxygenase andA is solely responsible for the dehydrogenation of preandiloid B leading to the enone preandiloid C, as well as for the intriguing structural rearrangement to generate the bicyclo[2.2.2]octane core, transforming preandiloid C into andiconin. FAD-binding monooxygenase andJ then produces andilesin D which is reduced by dehydrogenase andI to yield andilesin A. Action of acetyltransferase andG followed by a spontaneous acetate elimination leads then to andilesin B, which is in turn substrate of the short chain dehydrogenase andH to yield andilesin C. Finally, the dioxygenase andF catalyzes the transformation of andilesin C to anditomin. This chain is O-acetyltransferase andG, found in Emericella variicolor (Aspergillus stellatus).